Reading from the N-terminus, the 272-residue chain is Putative G-protein coupled receptor GPR32P1 (272 aa).

The tract at residues 1–24 (MNGVSEGTRGCSDRQPGALTQGHS) is disordered. At 1-46 (MNGVSEGTRGCSDRQPGALTQGHSCSRKMNASRCLSEEVGSLRPLT) the chain is on the extracellular side. Asparagine 30 carries an N-linked (GlcNAc...) asparagine glycan. Residues 47-67 (MAVLSASFVVGVLGNGLVPWV) form a helical membrane-spanning segment. Over 68–78 (TVFRMARTVST) the chain is Cytoplasmic. The helical transmembrane segment at 79-99 (VCFFHLALADFMLSLSLPILV) threads the bilayer. Over 100-116 (YYIVSRQWLLGEWACKL) the chain is Extracellular. Cysteine 114 and cysteine 191 are joined by a disulfide. Residues 117-137 (YTGFVFLTFSTSNCLLVLISV) form a helical membrane-spanning segment. Over 138–158 (DRCISVLYPVWALNHRTEQRA) the chain is Cytoplasmic. The chain crosses the membrane as a helical span at residues 159–179 (SWLAFGVWLLAAALCSAHLKF). The Extracellular portion of the chain corresponds to 180–213 (RTTRKWNGCMQCYLQFNLENETAQMWTQEVFGRQ). An N-linked (GlcNAc...) asparagine glycan is attached at asparagine 199. The chain crosses the membrane as a helical span at residues 214–234 (MAVIMAHFLLGFLGPLAIIGT). The Cytoplasmic portion of the chain corresponds to 235–272 (CAHLIRAKLLREGWVHANRPKRLLLVLVSALSAGSHLT).

The protein belongs to the G-protein coupled receptor 1 family.

The protein localises to the cell membrane. Orphan receptor. The sequence is that of Putative G-protein coupled receptor GPR32P1 (GPR32P1) from Homo sapiens (Human).